We begin with the raw amino-acid sequence, 361 residues long: MTARLRPVLAGLPVYVPGKTVPGAIKLASNETVFGPLPSVRAAIEHATQSINRYPDNGCLAVKAALARHVSSLSAADFGPEHIAVGCGSVSLCQQLVQITASVGDEVIFGWRSFELYPPQVQVAGATAIQVPLTNHTFDLEAMLAAVTERTRLIIVCNPNNPTSTVVQPEALAEFVRSVPPHILVAIDEAYVEYLRDGTVPDSPHLVRTHSNVVVLRTFSKAYGLAGLRVGYAVGQPDVIAALDKVYVPFTVSSLAQAAAIASVQAADELLARTDAVVAERGRVSAELRAAGFTVPPSQANFVWLPLEDRTTDFVTQAAKAHIVVRPYGADGVRVTIAAPEENDALLRFARCWITHRDGAR.

Position 221 is an N6-(pyridoxal phosphate)lysine (Lys221).

Belongs to the class-II pyridoxal-phosphate-dependent aminotransferase family. In terms of assembly, homodimer. Pyridoxal 5'-phosphate serves as cofactor.

The enzyme catalyses an aromatic L-alpha-amino acid + 2-oxoglutarate = an aromatic oxo-acid + L-glutamate. Aminotransferase that catalyzes the conversion of aromatic amino acids and 2-oxoglutarate into corresponding aromatic oxo acids and L-glutamate. This chain is Aromatic amino acid aminotransferase, found in Mycobacterium marinum (strain ATCC BAA-535 / M).